A 306-amino-acid polypeptide reads, in one-letter code: MAAVDDLQFEEFGDGATLLAANPDATTINIEDPSVSFGHQPRPPGSVGREEDEELLGNNDSDETELLAGQKRSSPFWTFEYYQTFFDVDTYQVFDRIKGSLLPVPGKNFVRLYIRSNPDLYGPFWICATLVFAIAISGNLSNFLIHLGEKTYHYVPEFQKVSIAATVIYAYAWLVPLALWGFLLWRNSKVMSMVSYSFLEIVCVYGYSLFIYIPTAVLWIIPQRVVRWVLVMIALGVSGSVLVMTFWPAVREDNRRVALATIVTIVLLHVLLSVGCLAYFFDAPEMDHLPAAITTPNQTVTAAKSS.

Over 1–119 (MAAVDDLQFE…VRLYIRSNPD (119 aa)) the chain is Cytoplasmic. The tract at residues 30 to 63 (IEDPSVSFGHQPRPPGSVGREEDEELLGNNDSDE) is disordered. Over residues 50–63 (EEDEELLGNNDSDE) the composition is skewed to acidic residues. The helical transmembrane segment at 120-140 (LYGPFWICATLVFAIAISGNL) threads the bilayer. Residues 141 to 162 (SNFLIHLGEKTYHYVPEFQKVS) are Lumenal-facing. A helical transmembrane segment spans residues 163-183 (IAATVIYAYAWLVPLALWGFL). Residues 184–200 (LWRNSKVMSMVSYSFLE) lie on the Cytoplasmic side of the membrane. Residues 201-221 (IVCVYGYSLFIYIPTAVLWII) traverse the membrane as a helical segment. Residues 222–227 (PQRVVR) lie on the Lumenal side of the membrane. A helical transmembrane segment spans residues 228–248 (WVLVMIALGVSGSVLVMTFWP). Over 249–256 (AVREDNRR) the chain is Cytoplasmic. A helical membrane pass occupies residues 257 to 277 (VALATIVTIVLLHVLLSVGCL). Over 278 to 306 (AYFFDAPEMDHLPAAITTPNQTVTAAKSS) the chain is Lumenal. Asn297 is a glycosylation site (N-linked (GlcNAc...) asparagine).

The protein belongs to the YIP1 family. As to quaternary structure, interacts with YIPF6; this interaction may stabilize YIPF1. May also form a ternary complex with YIPF2 and YIPF6.

The protein resides in the golgi apparatus. The protein localises to the cis-Golgi network membrane. It is found in the trans-Golgi network membrane. It localises to the late endosome membrane. This Mus musculus (Mouse) protein is Protein YIPF1 (Yipf1).